The sequence spans 129 residues: Large ribosomal subunit protein bL12c (129 aa).

The protein belongs to the bacterial ribosomal protein bL12 family. As to quaternary structure, homodimer. Part of the ribosomal stalk of the 50S ribosomal subunit. Forms a multimeric L10(L12)X complex, where L10 forms an elongated spine to which 2 to 4 L12 dimers bind in a sequential fashion. Binds GTP-bound translation factors.

The protein localises to the plastid. It is found in the chloroplast. In terms of biological role, forms part of the ribosomal stalk which helps the ribosome interact with GTP-bound translation factors. Is thus essential for accurate translation. This Porphyra purpurea (Red seaweed) protein is Large ribosomal subunit protein bL12c.